The primary structure comprises 262 residues: Small ribosomal subunit protein uS2 (262 aa).

Residues 228–262 are disordered; that stretch reads VSNEEVAAEQNIDLDESKEATEAETTEENTSVESN.

It belongs to the universal ribosomal protein uS2 family.

This is Small ribosomal subunit protein uS2 from Staphylococcus saprophyticus subsp. saprophyticus (strain ATCC 15305 / DSM 20229 / NCIMB 8711 / NCTC 7292 / S-41).